A 438-amino-acid polypeptide reads, in one-letter code: Probable trafficking protein particle complex subunit 13 homolog (438 aa).

Belongs to the TRAPPC13 family.

In Drosophila melanogaster (Fruit fly), this protein is Probable trafficking protein particle complex subunit 13 homolog.